Here is a 410-residue protein sequence, read N- to C-terminus: HAUS augmin-like complex subunit 8 (410 aa).

The interval 1 to 104 is disordered; that stretch reads MADSSGRGAG…HGTAPPDLDL (104 aa). Position 2 is an N-acetylalanine (Ala2). Ser105 is subject to Phosphoserine. The disordered stretch occupies residues 118 to 143; it reads QLAKTISKKPESTSFSAPRKKSPDLS. Residues 156-208 adopt a coiled-coil conformation; that stretch reads LTLLSVKMENNLAEFERRAEKNLLIMCKEKEKLQKKAHELKRRLLLSQRKREL. Positions 353–410 are disordered; sequence ACRESGGAPKNTPLSEDDNPGASSAPAQATFISPSEDFSSSSQAEVPPSLSRSGRDLS. A compositionally biased stretch (polar residues) spans 373–384; it reads GASSAPAQATFI. Low complexity predominate over residues 385–394; the sequence is SPSEDFSSSS.

Belongs to the HAUS8 family. Component of the HAUS augmin-like complex. The complex interacts with the gamma-tubulin ring complex and this interaction is required for spindle assembly. Associates with microtubules. The interaction with microtubules is strong during mitosis, while it is weak or absent during interphase. It is unclear whether this interaction is direct or indirect. Interacts with EML3 (phosphorylated at 'Thr-881') and TUBG1.

The protein localises to the cytoplasm. Its subcellular location is the cytoskeleton. It localises to the microtubule organizing center. It is found in the centrosome. The protein resides in the spindle. The protein localises to the spindle pole. Functionally, contributes to mitotic spindle assembly, maintenance of centrosome integrity and completion of cytokinesis as part of the HAUS augmin-like complex. The sequence is that of HAUS augmin-like complex subunit 8 (HAUS8) from Homo sapiens (Human).